A 299-amino-acid polypeptide reads, in one-letter code: MTTTNRLRIALQKKGRLSKDCNELLKQCGVKINWNEQRLIAYAENMPIEILRVRDDDIPGLVFEGVVDLGIIGENVLEEEELGRLARGEKIEYKKLRTLDFGGCRLSLAIDRDRTYNGVQDFVNSRIATSYPNLLKRYMNEKGVAFKSTLLNGSVEVAPSAGLADAICDLVSSGATLEANGLKEVEVIYQSKACLIQRAEPLSAEKQALVDRLLTRIQGVQQAAESKYIMLHAPKDKLKEITALLPGVENPTILPLANDSARVAMHVVSQENLFWETMEQLKEMGASSVLVLPIEKMLA.

This sequence belongs to the ATP phosphoribosyltransferase family. Long subfamily. Mg(2+) serves as cofactor.

The protein resides in the cytoplasm. It catalyses the reaction 1-(5-phospho-beta-D-ribosyl)-ATP + diphosphate = 5-phospho-alpha-D-ribose 1-diphosphate + ATP. It functions in the pathway amino-acid biosynthesis; L-histidine biosynthesis; L-histidine from 5-phospho-alpha-D-ribose 1-diphosphate: step 1/9. With respect to regulation, feedback inhibited by histidine. Its function is as follows. Catalyzes the condensation of ATP and 5-phosphoribose 1-diphosphate to form N'-(5'-phosphoribosyl)-ATP (PR-ATP). Has a crucial role in the pathway because the rate of histidine biosynthesis seems to be controlled primarily by regulation of HisG enzymatic activity. The sequence is that of ATP phosphoribosyltransferase from Actinobacillus pleuropneumoniae serotype 7 (strain AP76).